The chain runs to 466 residues: Ribulose bisphosphate carboxylase large chain (466 aa).

Lysine 5 is subject to N6,N6,N6-trimethyllysine. Asparagine 114 and threonine 164 together coordinate substrate. Residue lysine 166 is the Proton acceptor of the active site. Lysine 168 contacts substrate. Mg(2+) contacts are provided by lysine 192, aspartate 194, and glutamate 195. At lysine 192 the chain carries N6-carboxylysine. Histidine 285 functions as the Proton acceptor in the catalytic mechanism. Positions 286, 318, and 370 each coordinate substrate.

It belongs to the RuBisCO large chain family. Type I subfamily. As to quaternary structure, heterohexadecamer of 8 large chains and 8 small chains; disulfide-linked. The disulfide link is formed within the large subunit homodimers. Requires Mg(2+) as cofactor. Post-translationally, the disulfide bond which can form in the large chain dimeric partners within the hexadecamer appears to be associated with oxidative stress and protein turnover.

It localises to the plastid. The protein resides in the chloroplast. It catalyses the reaction 2 (2R)-3-phosphoglycerate + 2 H(+) = D-ribulose 1,5-bisphosphate + CO2 + H2O. The catalysed reaction is D-ribulose 1,5-bisphosphate + O2 = 2-phosphoglycolate + (2R)-3-phosphoglycerate + 2 H(+). Its function is as follows. RuBisCO catalyzes two reactions: the carboxylation of D-ribulose 1,5-bisphosphate, the primary event in carbon dioxide fixation, as well as the oxidative fragmentation of the pentose substrate in the photorespiration process. Both reactions occur simultaneously and in competition at the same active site. The chain is Ribulose bisphosphate carboxylase large chain from Drosophyllum lusitanicum (Portuguese sundew).